The following is a 630-amino-acid chain: Protein mono-ADP-ribosyltransferase PARP6 (630 aa).

Cysteine 237 carries the post-translational modification ADP-ribosylcysteine. The 227-residue stretch at 394-620 (EMTQGSYLEI…QDPKIQKEIM (227 aa)) folds into the PARP catalytic domain. Aspartate 600 is subject to ADP-ribosyl aspartic acid.

It belongs to the ARTD/PARP family. Auto-mono-ADP-ribosylated.

It catalyses the reaction L-aspartyl-[protein] + NAD(+) = 4-O-(ADP-D-ribosyl)-L-aspartyl-[protein] + nicotinamide. The enzyme catalyses L-cysteinyl-[protein] + NAD(+) = S-(ADP-D-ribosyl)-L-cysteinyl-[protein] + nicotinamide + H(+). Mono-ADP-ribosyltransferase that mediates mono-ADP-ribosylation of target proteins. This Homo sapiens (Human) protein is Protein mono-ADP-ribosyltransferase PARP6.